The sequence spans 302 residues: Glycine--tRNA ligase alpha subunit (302 aa).

It belongs to the class-II aminoacyl-tRNA synthetase family. Tetramer of two alpha and two beta subunits.

Its subcellular location is the cytoplasm. It carries out the reaction tRNA(Gly) + glycine + ATP = glycyl-tRNA(Gly) + AMP + diphosphate. This Haemophilus influenzae (strain ATCC 51907 / DSM 11121 / KW20 / Rd) protein is Glycine--tRNA ligase alpha subunit (glyQ).